The chain runs to 280 residues: Transcription factor ovo-like homolog lin-48 (280 aa).

4 C2H2-type zinc fingers span residues 133–155 (LTCH…IKCH), 161–183 (YLCT…TRTH), 189–212 (YKCE…RKVH), and 228–251 (FVCE…KVVH).

It is found in the nucleus. In terms of biological role, transcription factor. Involved in development of the hindgut, the male tail, and the excretory duct cell. Involved in modulating function of excretory duct cells. Plays a role in left/right patterning of cell fates in the hindgut. The protein is Transcription factor ovo-like homolog lin-48 of Caenorhabditis elegans.